The following is a 372-amino-acid chain: Envelope phospholipase OPG057 (372 aa).

A YPPL motif is present at residues 153 to 156; it reads YPPL. S-palmitoyl cysteine; by host attachment occurs at residues cysteine 185 and cysteine 186. A PLD phosphodiesterase domain is found at 307–334; that stretch reads FTIQNNTKLLIVDDEYVHITSANFDGTH.

It belongs to the orthopoxvirus OPG057 family. As to quaternary structure, interacts with protein OPG190. Post-translationally, palmitoylated. Attachment of the palmitate moiety is essential for correct intracellular targeting and protein function.

It localises to the virion membrane. The protein localises to the host Golgi apparatus. The protein resides in the host trans-Golgi network. Its subcellular location is the host endoplasmic reticulum membrane. The enzyme catalyses a 1,2-diacyl-sn-glycero-3-phosphocholine + H2O = a 1,2-diacyl-sn-glycero-3-phosphate + choline + H(+). Functionally, major envelope protein that plays a role in the biogenesis of the viral double membrane and in egress of virus from the host cell. Produces the wrapped form of virus that is required for cell-to-cell spread. Acts as a lipase with broad specificity including phospholipase C, phospholipase A, and triacylglycerol lipase activities. The chain is Envelope phospholipase OPG057 (OPG057) from Cynomys gunnisoni (Gunnison's prairie dog).